Reading from the N-terminus, the 693-residue chain is Subtilisin-like protease SBT4.10 (693 aa).

The signal sequence occupies residues 1 to 25 (MAKLREASFCALACVLVLFLSFVSA). Residues 26 to 113 (DTYNRQDKQV…VFPSKKYKLH (88 aa)) constitute a propeptide, activation peptide. The 79-residue stretch at 35–113 (VYVVYMGSLP…VFPSKKYKLH (79 aa)) folds into the Inhibitor I9 domain. The Peptidase S8 domain occupies 117–536 (SWDFMGLKEG…SGHIDPIAAI (420 aa)). The active-site Charge relay system is D145. Residue N176 is glycosylated (N-linked (GlcNAc...) asparagine). The active-site Charge relay system is the H200. N215, N223, N368, N413, and N467 each carry an N-linked (GlcNAc...) asparagine glycan. The region spanning 354–396 (QYPLVYETSVEKCNNESLTTLALSFLTLTPQSNEQIISMFHTL) is the PA domain. S475 serves as the catalytic Charge relay system. Residues N559, N603, and N613 are each glycosylated (N-linked (GlcNAc...) asparagine).

This sequence belongs to the peptidase S8 family. The C-terminal propeptide is autocleaved.

The protein localises to the secreted. In Arabidopsis thaliana (Mouse-ear cress), this protein is Subtilisin-like protease SBT4.10.